The sequence spans 472 residues: Glutamate--tRNA ligase (472 aa).

The 'HIGH' region signature appears at 10 to 20 (PSPTGYLHVGG). The Zn(2+) site is built by cysteine 99, cysteine 101, cysteine 126, and aspartate 128. The 'KMSKS' region motif lies at 238 to 242 (KLSKR). Lysine 241 serves as a coordination point for ATP.

The protein belongs to the class-I aminoacyl-tRNA synthetase family. Glutamate--tRNA ligase type 1 subfamily. In terms of assembly, monomer. Zn(2+) serves as cofactor.

It is found in the cytoplasm. The enzyme catalyses tRNA(Glu) + L-glutamate + ATP = L-glutamyl-tRNA(Glu) + AMP + diphosphate. In terms of biological role, catalyzes the attachment of glutamate to tRNA(Glu) in a two-step reaction: glutamate is first activated by ATP to form Glu-AMP and then transferred to the acceptor end of tRNA(Glu). The chain is Glutamate--tRNA ligase from Photorhabdus laumondii subsp. laumondii (strain DSM 15139 / CIP 105565 / TT01) (Photorhabdus luminescens subsp. laumondii).